The primary structure comprises 704 residues: ATP-dependent DNA helicase Hel308 (704 aa).

ATP is bound by residues Gln31 and 49–56 (SPTASGKT). The region spanning 36–200 (RKGLLDGKRL…WLNAELVATN (165 aa)) is the Helicase ATP-binding domain. Positions 148–151 (DEFH) match the DEAH box motif. Residues 235 to 439 (AIIAYTLDIV…AFYSFLISII (205 aa)) enclose the Helicase C-terminal domain. The tract at residues 366–645 (VVGYMDLIPV…LHARVKDGVK (280 aa)) is binds Hjc. Residues 432-644 (YSFLISIIAS…ELHARVKDGV (213 aa)) form a required for helicase activity region. The inhibits intrinsic ATPase, and helicase stretch occupies residues 646-704 (PELIELVKIPGIGRVRARLLYQHDIKKPEDIVLNPEKVKQLLGPNLGEKIVREAARTIA).

This sequence belongs to the helicase family. Hel308 subfamily. Monomer; forms a 1:2 complex with Hjc, which may form a complex with Holliday junction DNA. The cofactor is Mg(2+).

It catalyses the reaction Couples ATP hydrolysis with the unwinding of duplex DNA by translocating in the 3'-5' direction.. The catalysed reaction is ATP + H2O = ADP + phosphate + H(+). The enzyme catalyses Couples ATP hydrolysis with the unwinding of duplex DNA at the replication fork by translocating in the 5'-3' direction. This creates two antiparallel DNA single strands (ssDNA). The leading ssDNA polymer is the template for DNA polymerase III holoenzyme which synthesizes a continuous strand.. Helicase activity is inhibited by Hjc and by PCNA123 and PCNA323. Its function is as follows. An ATP, Mg(2+)-dependent DNA 3'-5' and 5'-3' helicase that may be involved in repair of stalled replication forks. Stimulated by both ss and dsDNA. Unwinds both leading and lagging strands in replication fork structures, unlike orthologs in P.furiosus and M.thermautotrophicus which only unwind the lagging strand and only have 3'-5' helicase activity. Preferentially binds dsDNA with overhangs or branched DNA. Able to anneal DNA substrates that could form a replication fork-like structure, has replication fork reversal activity (at least in vitro). This Sulfurisphaera tokodaii (strain DSM 16993 / JCM 10545 / NBRC 100140 / 7) (Sulfolobus tokodaii) protein is ATP-dependent DNA helicase Hel308.